Consider the following 445-residue polypeptide: Phosphoglucosamine mutase (445 aa).

The active-site Phosphoserine intermediate is Ser-102. Ser-102, Asp-241, Asp-243, and Asp-245 together coordinate Mg(2+). Ser-102 carries the phosphoserine modification.

It belongs to the phosphohexose mutase family. The cofactor is Mg(2+). Post-translationally, activated by phosphorylation.

It carries out the reaction alpha-D-glucosamine 1-phosphate = D-glucosamine 6-phosphate. Its function is as follows. Catalyzes the conversion of glucosamine-6-phosphate to glucosamine-1-phosphate. The sequence is that of Phosphoglucosamine mutase from Shewanella denitrificans (strain OS217 / ATCC BAA-1090 / DSM 15013).